The chain runs to 419 residues: C2 calcium-dependent domain-containing protein 4C (419 aa).

4 disordered regions span residues 1–96, 115–136, 151–225, and 247–300; these read MRKT…LASE, EDWTAEEATNADPQAQGAMSLP, AESP…SPFG, and VSQL…HTVK. Over residues 75–94 the composition is skewed to low complexity; sequence LASPGPRRAPRSPRLPAKLA. Residues 186–196 show a composition bias toward gly residues; the sequence is KGNGGDGGSRE. The segment covering 212 to 225 has biased composition (polar residues); the sequence is ESDTGSSAESSPFG. A phosphoserine mark is found at S259, S261, and S270. In terms of domain architecture, C2 spans 303–419; sequence TRGSVRLLAE…LPLTSLLPFL (117 aa).

This sequence belongs to the C2CD4 family.

In Mus musculus (Mouse), this protein is C2 calcium-dependent domain-containing protein 4C (C2cd4c).